The following is a 69-amino-acid chain: Pleurain-A2 (69 aa).

The N-terminal stretch at 1–22 is a signal peptide; that stretch reads MFTLKKTLLLLYFLGTISISLC. The propeptide occupies 23–43; that stretch reads KQERDADEDDGRKMTEEEVKR. Cys-63 and Cys-69 form a disulfide bridge.

Expressed by the skin glands.

The protein localises to the secreted. Antimicrobial peptide. Has activity against the Gram-positive bacterium S.aureus ATCC2592 (MIC=15 ug/ml), the Gram-negative bacteria E.coli ATCC25922 (MIC=60 ug/ml), B.dysenteriae (MIC=60 ug/ml), H.pylori NTCT11637 (MIC=30 ug/ml), and the fungus C.albicans ATCC2002 (MIC=30 ug/ml). Has little hemolytic activity on rabbit red blood cells. The chain is Pleurain-A2 from Nidirana pleuraden (Yunnan pond frog).